The primary structure comprises 185 residues: Ribosome-recycling factor (185 aa).

The segment at 127-158 (AVRNTRQDANNKVKKLEKDKEISEDESKKAQE) is disordered.

Belongs to the RRF family.

Its subcellular location is the cytoplasm. In terms of biological role, responsible for the release of ribosomes from messenger RNA at the termination of protein biosynthesis. May increase the efficiency of translation by recycling ribosomes from one round of translation to another. This Helicobacter pylori (strain G27) protein is Ribosome-recycling factor.